Reading from the N-terminus, the 262-residue chain is Apolipoprotein A-I (262 aa).

A signal peptide spans 1–18 (MKFLALALTILLAAATQA). The tract at residues 32-63 (VKVAMMEYMAQVKETGQRSIDLLDDTEFKEYK) is 3 X approximate tandem repeats. Repeat copies occupy residues 64–85 (VQLS…QSLA) and 87–107 (YSEA…AEVM). The tract at residues 64–262 (VQLSQSLDNL…YETISQAMKA (199 aa)) is 10 X approximate tandem repeats. One copy of the 3; half-length repeat lies at 108-118 (KDVEDVRTQLE). 5 repeat units span residues 119 to 140 (PKRA…KKLE), 141 to 162 (PLIK…VKME), 163 to 184 (PVVE…AKLM), 185 to 206 (PIVE…TLAA), and 207 to 228 (PYAE…EKVG). The stretch at 229–239 (PLTNDFKGQVG) is one 9; half-length repeat. Repeat 10 spans residues 240–262 (PAAEQAKEKLMDFYETISQAMKA).

This sequence belongs to the apolipoprotein A1/A4/E family.

It localises to the secreted. Its function is as follows. Participates in the reverse transport of cholesterol from tissues to the liver for excretion by promoting cholesterol efflux from tissues and by acting as a cofactor for the lecithin cholesterol acyltransferase (LCAT). The sequence is that of Apolipoprotein A-I (apoa1) from Salmo trutta (Brown trout).